We begin with the raw amino-acid sequence, 356 residues long: Phosphoribosylformylglycinamidine cyclo-ligase (356 aa).

This sequence belongs to the AIR synthase family.

It localises to the cytoplasm. It catalyses the reaction 2-formamido-N(1)-(5-O-phospho-beta-D-ribosyl)acetamidine + ATP = 5-amino-1-(5-phospho-beta-D-ribosyl)imidazole + ADP + phosphate + H(+). It participates in purine metabolism; IMP biosynthesis via de novo pathway; 5-amino-1-(5-phospho-D-ribosyl)imidazole from N(2)-formyl-N(1)-(5-phospho-D-ribosyl)glycinamide: step 2/2. This chain is Phosphoribosylformylglycinamidine cyclo-ligase, found in Acinetobacter baumannii (strain AB307-0294).